A 22-amino-acid chain; its full sequence is Oxygen-evolving enhancer protein 2 (22 aa).

This sequence belongs to the PsbP family.

It is found in the plastid. Its subcellular location is the chloroplast thylakoid membrane. Its function is as follows. May be involved in the regulation of photosystem II. The sequence is that of Oxygen-evolving enhancer protein 2 from Physcomitrium patens (Spreading-leaved earth moss).